Reading from the N-terminus, the 481-residue chain is Dual specificity protein kinase CLK4 (481 aa).

Disordered regions lie at residues 1–47 and 102–143; these read MRHS…KPHH and SKSS…EDDE. A compositionally biased stretch (basic and acidic residues) spans 8-19; it reads HCPDWDSRESWG. 2 stretches are compositionally biased toward basic residues: residues 106 to 119 and 126 to 136; these read VRSRRSSPKRKRNR and SHSKSHRRKRS. Residues Ser136 and Ser138 each carry the phosphoserine modification. The Protein kinase domain occupies 159 to 475; sequence YEIVDTLGEG…LDEALQHPFF (317 aa). ATP-binding positions include 165 to 173 and Lys189; that span reads LGEGAFGKV. Residue Asp286 is the Proton acceptor of the active site.

The protein belongs to the protein kinase superfamily. CMGC Ser/Thr protein kinase family. Lammer subfamily. As to quaternary structure, interacts with UBL5. Autophosphorylates on all three types of residues. As to expression, expressed in the hippocampus, the cerebellum and the olfactory bulb.

It is found in the nucleus. It carries out the reaction L-seryl-[protein] + ATP = O-phospho-L-seryl-[protein] + ADP + H(+). The catalysed reaction is L-threonyl-[protein] + ATP = O-phospho-L-threonyl-[protein] + ADP + H(+). The enzyme catalyses L-tyrosyl-[protein] + ATP = O-phospho-L-tyrosyl-[protein] + ADP + H(+). With respect to regulation, TG003 inhibits its kinase activity and affects the regulation of alternative splicing mediated by phosphorylation of SR proteins. Functionally, dual specificity kinase acting on both serine/threonine and tyrosine-containing substrates. Phosphorylates serine- and arginine-rich (SR) proteins of the spliceosomal complex and may be a constituent of a network of regulatory mechanisms that enable SR proteins to control RNA splicing. Phosphorylates SRSF1 and SRSF3. Required for the regulation of alternative splicing of MAPT/TAU. Regulates the alternative splicing of tissue factor (F3) pre-mRNA in endothelial cells. The chain is Dual specificity protein kinase CLK4 (Clk4) from Mus musculus (Mouse).